Here is a 712-residue protein sequence, read N- to C-terminus: Transferrin-binding protein B (712 aa).

An N-terminal signal peptide occupies residues 1–20 (MNNPLVNQAAMVLPVFLLSA). Cys21 carries N-palmitoyl cysteine lipidation. A lipid anchor (S-diacylglycerol cysteine) is attached at Cys21. The tract at residues 59–196 (GGYGFAMRLK…YHGKEPSRQL (138 aa)) is N-terminal handle domain. Disordered regions lie at residues 78-104 (EDEVKLDESDWEATGLPDEPKELPKRQ), 123-144 (PYLKPSNHQNGNTGNGINQPKN), 223-256 (IIQPSKSQGDRYSGFSGDDGEEYSNKNKSTLTDG), 309-338 (NGKATATDKPQQNSETKEHPFVSDSSSLSG), 364-398 (SAKTKDKPANGNTAAASGGTDAAASNGAAGTSSEN), 442-495 (ASES…GDTN), and 689-712 (NATNASGNSSATVVFGAKRQQPVR). The segment covering 95–104 (DEPKELPKRQ) has biased composition (basic and acidic residues). Residues 128 to 144 (SNHQNGNTGNGINQPKN) are compositionally biased toward polar residues. Positions 197-367 (PASGKITYKG…KVAVVGSAKT (171 aa)) are N-terminal beta barrel domain. Composition is skewed to low complexity over residues 372–398 (ANGNTAAASGGTDAAASNGAAGTSSEN) and 446–459 (GNNQANQGTNGGTA). The interval 389–555 (NGAAGTSSEN…SMFLQGERTD (167 aa)) is C-terminal handle domain. Basic and acidic residues predominate over residues 462-475 (RKFDHTPESDKKDA). Composition is skewed to polar residues over residues 477 to 495 (AGTQTNGAQTASNTAGDTN) and 689 to 700 (NATNASGNSSAT). The interval 556 to 712 (EKEIPSEQNI…FGAKRQQPVR (157 aa)) is C-terminal beta barrel domain.

This sequence belongs to the TbpB family. Isotype II subfamily. In terms of assembly, binds only human holo-transferrin (TF), via the TF C-terminus. Forms a large complex with TF and TbpA. Interacts via its C-terminal domain with Slam1.

It is found in the cell outer membrane. It localises to the cell surface. Its function is as follows. Neisseria acquires iron by extracting it from serum transferrin (TF) in its human host. Acts as a TF receptor and is required for TF utilization. Involved in the initial capture of TF. Helps select only those TF molecules that can be used as an iron source and concentrates them on the cell surface, maintaining the iron-loaded status of the TF C-terminal lobe until its delivery to TbpA. The protein is Transferrin-binding protein B of Neisseria meningitidis serogroup B (strain ATCC BAA-335 / MC58).